Consider the following 268-residue polypeptide: Thiazole synthase (268 aa).

Lysine 108 acts as the Schiff-base intermediate with DXP in catalysis. 1-deoxy-D-xylulose 5-phosphate-binding positions include glycine 169, 195–196, and 217–218; these read AG and NS. The segment at 248–268 is disordered; the sequence is RLKENPLASPSSPLEGVISNN. Residues 255–268 show a composition bias toward polar residues; the sequence is ASPSSPLEGVISNN.

The protein belongs to the ThiG family. Homotetramer. Forms heterodimers with either ThiH or ThiS.

It is found in the cytoplasm. The enzyme catalyses [ThiS sulfur-carrier protein]-C-terminal-Gly-aminoethanethioate + 2-iminoacetate + 1-deoxy-D-xylulose 5-phosphate = [ThiS sulfur-carrier protein]-C-terminal Gly-Gly + 2-[(2R,5Z)-2-carboxy-4-methylthiazol-5(2H)-ylidene]ethyl phosphate + 2 H2O + H(+). Its pathway is cofactor biosynthesis; thiamine diphosphate biosynthesis. Catalyzes the rearrangement of 1-deoxy-D-xylulose 5-phosphate (DXP) to produce the thiazole phosphate moiety of thiamine. Sulfur is provided by the thiocarboxylate moiety of the carrier protein ThiS. In vitro, sulfur can be provided by H(2)S. In Prochlorococcus marinus (strain NATL1A), this protein is Thiazole synthase.